The sequence spans 1902 residues: Putative surface cell antigen sca1 (1902 aa).

Residues 1-28 (MNKLTEQHLLKKSRFLKYSLLASISVGA) form the signal peptide. Disordered regions lie at residues 140 to 273 (GIEK…TFVP), 420 to 485 (QGVF…SRTA), 707 to 729 (TTTT…YSSS), 858 to 885 (NRRR…AWGN), and 1470 to 1548 (KSES…SDGD). Polar residues-rich tracts occupy residues 146-159 (QSQN…TEQM) and 168-197 (TASS…SPEH). A compositionally biased stretch (low complexity) spans 199 to 212 (TTAPGTPSSTPATP). The segment covering 225–238 (LGANTPPNINTNSK) has biased composition (polar residues). Low complexity predominate over residues 246 to 264 (SSSGPQQQAVQSSSQVKSE). A compositionally biased stretch (polar residues) spans 423–439 (FNKNKSSGGNARKSSAG). The segment covering 445–482 (KKQEAQKQLSEIKKQEKAIKTASDKAKEVAASAKKETS) has biased composition (basic and acidic residues). Basic and acidic residues predominate over residues 863–874 (RDGETSKQRTVD). Over residues 1491 to 1507 (LSSLPALASSNESALAL) the composition is skewed to low complexity. The segment covering 1521–1538 (SSEDEESYDSGFEEEEET) has biased composition (acidic residues). The 285-residue stretch at 1618-1902 (ESHIKRGLWM…QGSVKLKVNL (285 aa)) folds into the Autotransporter domain.

The protein localises to the cell outer membrane. This chain is Putative surface cell antigen sca1 (sca1), found in Rickettsia conorii (strain ATCC VR-613 / Malish 7).